The chain runs to 105 residues: Small ribosomal subunit protein uS10 (105 aa).

It belongs to the universal ribosomal protein uS10 family. In terms of assembly, part of the 30S ribosomal subunit.

Functionally, involved in the binding of tRNA to the ribosomes. The polypeptide is Small ribosomal subunit protein uS10 (Desulfovibrio desulfuricans (strain ATCC 27774 / DSM 6949 / MB)).